The chain runs to 498 residues: MFLLHILAIGACLLWYFVRSDKRKQGSNIPTIRRWPALFPEFLDRLSYNSCAARLVENGYREHKDRPFRLLKMDMDLVVIPLKYAQEMRALTSDELDPLTAVFDDNVGKVTGILLDSQLHTHAIQRRLTPRLPNIIPAMMDELNYAFQQVIPSEAGERLQTSWVPINPYDMVLELSTRAAARLFVGEPICRDEVFLKTSAAYSRNIFDTIHVSRSLGHIITPYLGSLIPSVRQFHQQFEYIQNLVLGEIAHRKQHSEDNKADDFLQWCMELARTKEESTPTALAQRTVGILSMAVVHTSAMATTHLLFDMISNQELREQLRTEQKQVLKQGWMGITQQTMLDMKQLDSVMRESQRINPVGEFTFRRIVRKPITLSDGFQLHPGQQIAIAARCINTDGDVLPDAETFKPMRWMEKESAASTGFAHSSDSNLHFGLGRYACPGRFLASYMIKAIISRVLFDYEFKLQDDSAAGRPPNLIHGDKIFPSRDVTVLFRRRHDE.

The first 20 residues, 1–20 (MFLLHILAIGACLLWYFVRS), serve as a signal peptide directing secretion. Cys439 is a heme binding site.

It belongs to the cytochrome P450 family. It depends on heme as a cofactor.

It participates in secondary metabolite biosynthesis. In terms of biological role, cytochrome P450 monooxygenase; part of the gene cluster that mediates the biosynthesis of paspalitrems, indole-diterpene (IDT) mycotoxins that are potent tremorgens in mammals. The geranylgeranyl diphosphate (GGPP) synthase idtG is proposed to catalyze the first step in IDT biosynthesis via catalysis of a series of iterative condensations of isopentenyl diphosphate (IPP) with dimethylallyl diphosphate (DMAPP), geranyl diphosphate (GPP), and farnesyl diphosphate (FPP), to form GGPP. Condensation of indole-3-glycerol phosphate with GGPP by the prenyltransferase idtC then forms 3-geranylgeranylindole (3-GGI). Epoxidation of the two terminal alkenes of the geranylgeranyl moiety by the FAD-dependent monooxygenase idtM, and cyclization by the terpene cyclase idtB then leads to the production of paspaline. The cytochrome P450 monooxygenase idtP then catalyzes oxidative elimination of the pendant methyl group at C-12 of paspaline and generates the C-10 ketone to yield 13-desoxypaxilline. The cytochrome P450 monooxygenase idtQ may catalyze the C-13 oxidation of 13-desoxypaxilline to afford paxilline. Considering that both paspalicine and paxilline were detected in C.paspali, idtQ also catalyzes the formation of paspalinine from 13-desoxypaxilline via paspalicine as an intermediate. Finally, the alpha-prenyltransferase idtF prenylates paspalinine at the C-20 or the C-21 positions to yield paspalitrems A and C, respectively. The hydroxylation of paspalitrem A at C-32 by a still unknown oxidase affords paspalitrem B. This Claviceps paspali (Rye ergot fungus) protein is Cytochrome P450 monooxygenase idtP.